A 251-amino-acid chain; its full sequence is MAHRLQLRLLTWDVKDTLLRLRHPVGVEYATKARAHGLEVEATALGQAFKQAYKAQSQSFPNYGLGHGLTSHQWWLDLVQQTFHQAGVRDAQAVAPIAEQLYKDFSSPSTWQVLEGAEATLRGCRKRGLKLAVVSNFDRRLEDILEGVGLREHFDFVLTSEAAGWPKPDPRIFHEALHLAQVEPAVGAHIGDSYQRDYKGARAVGMHSFLVAGPEPLDPAVKDSVPQEHFLPSLSHLLPALDYLEGSSARL.

At Lys15 the chain carries N6-acetyllysine; alternate. Lys15 carries the post-translational modification N6-succinyllysine; alternate. At Lys130 the chain carries N6-acetyllysine.

Belongs to the HAD-like hydrolase superfamily.

The polypeptide is Haloacid dehalogenase-like hydrolase domain-containing protein 3 (HDHD3) (Bos taurus (Bovine)).